A 182-amino-acid polypeptide reads, in one-letter code: Large ribosomal subunit protein uL6 (182 aa).

Belongs to the universal ribosomal protein uL6 family. Part of the 50S ribosomal subunit.

In terms of biological role, this protein binds to the 23S rRNA, and is important in its secondary structure. It is located near the subunit interface in the base of the L7/L12 stalk, and near the tRNA binding site of the peptidyltransferase center. This is Large ribosomal subunit protein uL6 from Nostoc punctiforme (strain ATCC 29133 / PCC 73102).